Here is a 1305-residue protein sequence, read N- to C-terminus: Adenylate cyclase type 9 (1305 aa).

Residues 1 to 110 are Cytoplasmic-facing; it reads MASPVNQQLL…CFPQTQRRFR (110 aa). Over residues 46–55 the composition is skewed to low complexity; that stretch reads ISSSCSSGES. Residues 46–71 are disordered; the sequence is ISSSCSSGESGVKKTGGSGGARRQKK. A helical transmembrane segment spans residues 111 to 131; that stretch reads YALMYLSVAGLLWSIYFSVHM. Topologically, residues 132-134 are extracellular; that stretch reads KTK. The helical transmembrane segment at 135–155 threads the bilayer; that stretch reads LVSHLVPTLCFLIVCLGFFFF. The Cytoplasmic segment spans residues 156 to 164; that stretch reads TFTKSYARH. Residues 165-185 form a helical membrane-spanning segment; sequence CTAISLLVTLLVFTLTLASQF. Residues 186–209 lie on the Extracellular side of the membrane; the sequence is QVLNPGLGSDSLSNLTSFSATGSS. Residue asparagine 199 is glycosylated (N-linked (GlcNAc...) asparagine). A helical transmembrane segment spans residues 210-229; that stretch reads SCLSQVGSFSICVEVLLLLY. The Cytoplasmic portion of the chain corresponds to 230 to 235; it reads TVMHLP. The chain crosses the membrane as a helical span at residues 236-253; sequence LYLSACLGVAYSILFETF. The Extracellular segment spans residues 254–274; the sequence is GYHFRDESCFVLLVGRMAHWE. Residues 275 to 295 form a helical membrane-spanning segment; it reads LLSKALLHVCIHAIGVHLFIM. Residues 296-778 lie on the Cytoplasmic side of the membrane; sequence SEVRSRSTFL…VKTFASATFS (483 aa). The tract at residues 343–369 is disordered; sequence QGDDESENSVKRHSASSPKSRKKKSSI. A compositionally biased stretch (basic residues) spans 353–368; it reads KRHSASSPKSRKKKSS. Mg(2+)-binding residues include aspartate 393, isoleucine 394, and aspartate 437. Residues 393–398, 435–437, and arginine 481 each bind ATP; these read DIVGFT and LGD. Composition is skewed to polar residues over residues 607–618 and 670–680; these read SDSHTNCTQPET and ESSTGDTLTNS. Residues 607–680 are disordered; the sequence is SDSHTNCTQP…SSTGDTLTNS (74 aa). Residues 779–799 traverse the membrane as a helical segment; sequence SLQDVLLNYFIFVLLSVACLL. The Extracellular portion of the chain corresponds to 800 to 810; the sequence is KPGTNTVSPPT. Residues 811 to 831 form a helical membrane-spanning segment; it reads LALVLLSVCGLLGFLSLLVSV. The Cytoplasmic segment spans residues 832-859; the sequence is RMAFYLEDMLLCTRRLLEIISGWVPRHF. Residues 860 to 880 traverse the membrane as a helical segment; sequence IGTVLVCLPAAVIFSYLSSDF. Topologically, residues 881–883 are extracellular; it reads YTD. The chain crosses the membrane as a helical span at residues 884-904; the sequence is IHYTMFLCSALLIPMVQYCNF. The Cytoplasmic portion of the chain corresponds to 905-911; sequence CQLSSSA. The helical transmembrane segment at 912-932 threads the bilayer; that stretch reads LLLATITGATMLILIYLPLCP. The Extracellular segment spans residues 933–966; it reads QRPPLDPGTDIEANLSTSNSSYETLDNPRTELPF. N-linked (GlcNAc...) asparagine glycosylation is found at asparagine 946 and asparagine 951. Residues 967-987 traverse the membrane as a helical segment; sequence TRLGQEIAVAYFLLLLLVWFL. Topologically, residues 988-1305 are cytoplasmic; the sequence is NREFDVSYRL…EERGRDGGAR (318 aa). ATP contacts are provided by residues lysine 1099, 1176 to 1178, 1183 to 1187, and lysine 1223; these read DIW and NIASR. The disordered stretch occupies residues 1261 to 1305; sequence SIGRSPTDEISSLVTGGKGAVELGSGEAERKREKAEERGRDGGAR. Over residues 1287 to 1305 the composition is skewed to basic and acidic residues; the sequence is EAERKREKAEERGRDGGAR.

The protein belongs to the adenylyl cyclase class-4/guanylyl cyclase family. The cofactor is Mg(2+). Mn(2+) is required as a cofactor. In terms of tissue distribution, detected in oocytes.

The protein resides in the cell membrane. It carries out the reaction ATP = 3',5'-cyclic AMP + diphosphate. Functionally, adenylyl cyclase that catalyzes the formation of the signaling molecule cAMP in response to activation of G protein-coupled receptors. In Xenopus laevis (African clawed frog), this protein is Adenylate cyclase type 9 (adcy9).